Reading from the N-terminus, the 218-residue chain is NAD(P)H-quinone oxidoreductase subunit U, chloroplastic (218 aa).

The transit peptide at 1–53 (MASLSTITQPSLVHIPGESVLHHVPSTCSFPWKPTINTKRIICSPARNSSEVS) directs the protein to the chloroplast. The interval 47–72 (RNSSEVSAEAETEGGSSTAVDEAPKE) is disordered. In terms of domain architecture, J spans 95 to 159 (DHYGRLGIFR…EERRMYDWSL (65 aa)). A helical transmembrane segment spans residues 197–217 (ILGYFIGAWLVLGVALSVAFN).

In terms of assembly, part of the chloroplast NDH complex, composed of a mixture of chloroplast and nucleus encoded subunits. Component of the electron donor-binding subcomplex, at least composed of NDHS, NDHT and NDHU.

It is found in the plastid. The protein localises to the chloroplast thylakoid membrane. The enzyme catalyses a plastoquinone + NADH + (n+1) H(+)(in) = a plastoquinol + NAD(+) + n H(+)(out). It catalyses the reaction a plastoquinone + NADPH + (n+1) H(+)(in) = a plastoquinol + NADP(+) + n H(+)(out). In terms of biological role, NDH shuttles electrons from NAD(P)H:plastoquinone, via FMN and iron-sulfur (Fe-S) centers, to quinones in the photosynthetic chain and possibly in a chloroplast respiratory chain. The immediate electron acceptor for the enzyme in this species is believed to be plastoquinone. Couples the redox reaction to proton translocation, and thus conserves the redox energy in a proton gradient. The polypeptide is NAD(P)H-quinone oxidoreductase subunit U, chloroplastic (Arabidopsis thaliana (Mouse-ear cress)).